Reading from the N-terminus, the 293-residue chain is Small ribosomal subunit biogenesis GTPase RsgA (293 aa).

One can recognise a CP-type G domain in the interval 63 to 223 (KNELVRPPIA…VADTPGFSSL (161 aa)). GTP is bound by residues 112 to 115 (SKMD) and 166 to 174 (GQSGVGKSS). Residues C247, C252, H254, and C260 each contribute to the Zn(2+) site.

The protein belongs to the TRAFAC class YlqF/YawG GTPase family. RsgA subfamily. Monomer. Associates with 30S ribosomal subunit, binds 16S rRNA. Zn(2+) is required as a cofactor.

Its subcellular location is the cytoplasm. Functionally, one of several proteins that assist in the late maturation steps of the functional core of the 30S ribosomal subunit. Helps release RbfA from mature subunits. May play a role in the assembly of ribosomal proteins into the subunit. Circularly permuted GTPase that catalyzes slow GTP hydrolysis, GTPase activity is stimulated by the 30S ribosomal subunit. The polypeptide is Small ribosomal subunit biogenesis GTPase RsgA (Bacillus cereus (strain ATCC 10987 / NRS 248)).